Consider the following 224-residue polypeptide: UPF0758 protein Avin_02940 (224 aa).

The MPN domain maps to 102–224 (ALESPQAVRD…PLSMAEQGWL (123 aa)). 3 residues coordinate Zn(2+): His-173, His-175, and Asp-186. Residues 173–186 (HNHPSGIAEPSQAD) carry the JAMM motif motif.

This sequence belongs to the UPF0758 family.

In Azotobacter vinelandii (strain DJ / ATCC BAA-1303), this protein is UPF0758 protein Avin_02940.